A 376-amino-acid chain; its full sequence is Chaperone protein DnaJ (376 aa).

In terms of domain architecture, J spans 5–70; the sequence is DYYEVLGVAR…NKRRAYDAHG (66 aa). A CR-type zinc finger spans residues 132–209; the sequence is GIERRIEIPT…CHGAGRVEED (78 aa). Residues cysteine 145, cysteine 148, cysteine 161, cysteine 164, cysteine 183, cysteine 186, cysteine 197, and cysteine 200 each coordinate Zn(2+). CXXCXGXG motif repeat units follow at residues 145–152, 161–168, 183–190, and 197–204; these read CEPCHGSG, CATCHGRG, CPHCDGRG, and CKTCHGAG.

Belongs to the DnaJ family. Homodimer. Requires Zn(2+) as cofactor.

Its subcellular location is the cytoplasm. Functionally, participates actively in the response to hyperosmotic and heat shock by preventing the aggregation of stress-denatured proteins and by disaggregating proteins, also in an autonomous, DnaK-independent fashion. Unfolded proteins bind initially to DnaJ; upon interaction with the DnaJ-bound protein, DnaK hydrolyzes its bound ATP, resulting in the formation of a stable complex. GrpE releases ADP from DnaK; ATP binding to DnaK triggers the release of the substrate protein, thus completing the reaction cycle. Several rounds of ATP-dependent interactions between DnaJ, DnaK and GrpE are required for fully efficient folding. Also involved, together with DnaK and GrpE, in the DNA replication of plasmids through activation of initiation proteins. This is Chaperone protein DnaJ from Xanthomonas campestris pv. campestris (strain 8004).